The sequence spans 313 residues: uncharacterized protein (313 aa).

2 disordered regions span residues 24–53 (EEGEDMRSGAGSGGHHDDYFLESNRSPTPN) and 190–291 (TALS…PCAR). The span at 211-229 (TQNYVLKLQLSSPNSQPMS) shows a compositional bias: polar residues. Low complexity predominate over residues 239 to 260 (SCSSSNCSSSSSSSACSSVSIS). Over residues 261–284 (DPNNITAYETNNVNPQFPSNQPLD) the composition is skewed to polar residues.

This is an uncharacterized protein from Saccharomyces cerevisiae (strain ATCC 204508 / S288c) (Baker's yeast).